Reading from the N-terminus, the 568-residue chain is Malate synthase, glyoxysomal (568 aa).

Residues 1–20 are disordered; that stretch reads MGSLGMYSESGLTKKGSSRG. R183 acts as the Proton acceptor in catalysis. D469 acts as the Proton donor in catalysis. The Microbody targeting signal motif lies at 566-568; sequence SKL.

This sequence belongs to the malate synthase family.

It is found in the glyoxysome. It carries out the reaction glyoxylate + acetyl-CoA + H2O = (S)-malate + CoA + H(+). Its pathway is carbohydrate metabolism; glyoxylate cycle; (S)-malate from isocitrate: step 2/2. The protein is Malate synthase, glyoxysomal of Cucumis sativus (Cucumber).